Here is a 387-residue protein sequence, read N- to C-terminus: Zinc finger transcription factor YY1 (387 aa).

5 consecutive C2H2-type zinc fingers follow at residues 79-103 (FLCS…SHIH), 108-132 (YVCD…YLIH), 138-162 (YICT…MKTH), 168-193 (HICP…AAYH), and 230-255 (YACP…KREH). The interval 201–290 (TPKYTPPAEK…DDGSDQDVYR (90 aa)) is MED18-binding. The disordered stretch occupies residues 258-387 (HLQEENADTP…DDDEETEYED (130 aa)). A Phosphoserine modification is found at Ser284. Positions 291–305 (KHASNGKGQTHKQQS) are enriched in basic residues. Positions 319 to 326 (GKKGSTSS) match the Nuclear localization signal motif. A coiled-coil region spans residues 339-367 (AKETFEEVEREEEEDSEETEEDRDNVEDG). Composition is skewed to acidic residues over residues 344–363 (EEVE…DRDN) and 373–387 (NNED…EYED).

As to quaternary structure, interacts with MED18 to suppress disease susceptibility via the repression of genes glutaredoxins GRX480, GRXS13 and thioredoxin TRX-h5. In terms of tissue distribution, mostly expressed in flowers, to a lower extent in seedlings, stems and leaves, and, at low levels, in roots and senescent leaves.

The protein resides in the nucleus. Functionally, dual-function transcription factor with both repression and activation activities. Binds to 5'-CCATATT-3' motif in target gene promoters (e.g. ABR1). Also binds to G-rich DNA motif 5'-GGGGGCAGTGG-3'. Regulates the expression of genes involved in diverse cellular pathways, including glucose metabolism, photosynthesis, phototropism and stress response (e.g. salt, drought and osmotic stress). Regulates plant immunity, especially during necrotrophic fungal infection (e.g. B.cinerea). Binds to ABR1 promoter and promotes its expression, thus negatively regulating the abscisic acid (ABA) signaling pathway. Represses ABA- and salt-responsive genes expression. The sequence is that of Zinc finger transcription factor YY1 from Arabidopsis thaliana (Mouse-ear cress).